The following is a 94-amino-acid chain: Long neurotoxin LNTX37 (94 aa).

The signal sequence occupies residues 1 to 21; sequence MKTLLLTLVVVTIMCLDLGYT. 5 disulfide bridges follow: Cys-24–Cys-43, Cys-36–Cys-64, Cys-49–Cys-53, Cys-68–Cys-79, and Cys-80–Cys-85.

Belongs to the three-finger toxin family. Long-chain subfamily. Type II alpha-neurotoxin sub-subfamily. Expressed by the venom gland.

The protein localises to the secreted. Functionally, binds with high affinity to muscular (alpha-1/CHRNA1) and neuronal (alpha-7/CHRNA7) nicotinic acetylcholine receptor (nAChR) and inhibits acetylcholine from binding to the receptor, thereby impairing neuromuscular and neuronal transmission. This Ophiophagus hannah (King cobra) protein is Long neurotoxin LNTX37.